The following is a 287-amino-acid chain: Inorganic pyrophosphatase (287 aa).

A diphosphate-binding site is contributed by R79. D116, D121, and D153 together coordinate Mg(2+).

The protein belongs to the PPase family. Mg(2+) is required as a cofactor.

It is found in the cytoplasm. It catalyses the reaction diphosphate + H2O = 2 phosphate + H(+). The protein is Inorganic pyrophosphatase (IPP1) of Eremothecium gossypii (strain ATCC 10895 / CBS 109.51 / FGSC 9923 / NRRL Y-1056) (Yeast).